The following is a 484-amino-acid chain: MNRIHSNSDSAAGVTALTHHHLSNVSCVSSGSLGKRQHRVNSTFGDGNAACLLSGKISLQEASNALKQLLDAVPGNHKRPSLPDFLQTNPAVLSMMMTSLILNVFGNNAQSLCQQLERATEVQNALRNKQVKEYQEQIQKAIEQEDKARKAGIFGAIFDWITGIFETVIGALKVVEGFLSGNPAEMASGVAYMAAGCAGMVKAGAETAMMCGADHDTCQAIIDVTSKIQFGCEAVALALDVFQIGRAFMATRGLSGAAAKVLDSGFGEEVVERMVGAGEAEIEELAEKFGEEVSESFSKQFEPLEREMAMANEMAEEAAEFSRNVENNMTRSAGKSFTKEGVKAMAKEAAKEALEKCVQEGGKFLLKKFRNKVLFNMFKKILYALLRDCSFKGLQAIRCATEGASQMNTGMVNTEKAKIEKKIEQLITQQRFLDFIMQQTENQKKIEQKRLEELYKGSGAALRDVLDTIDHYSSVQARIAGYRA.

Helical transmembrane passes span 85–105 (FLQT…LNVF) and 152–172 (GIFG…IGAL). Coiled coils occupy residues 107–152 (NNAQ…RKAG) and 413–457 (NTEK…LYKG).

Belongs to the SctE/SipB/YopB family. The core secretion machinery of the T3SS is composed of approximately 20 different proteins, including cytoplasmic components, a base, an export apparatus and a needle. This subunit is involved in the formation of a pore, called the translocon, in host membrane. May form a complex with SseB and SseD/SctB2. SseB is required for correct localization of SseC/SctE2 on the bacterial cell surface.

The protein localises to the secreted. Its subcellular location is the cell surface. The protein resides in the host membrane. In terms of biological role, component of the type III secretion system 2 (SPI-2 T3SS), also called injectisome, which is used to inject bacterial effector proteins into eukaryotic host cells. SseC/SctE2 and SseD/SctB2 are inserted into the host membrane where they form a pore and allow the translocation of effector proteins into the cytosol of target cells. Its function is as follows. Required for the translocation of SPI-2 effector proteins. Required for systemic Salmonella infection of the mouse. Essential for SpvB-induced actin depolymerization in the host cell cytoplasm. This Salmonella typhimurium (strain LT2 / SGSC1412 / ATCC 700720) protein is SPI-2 type 3 secretion system translocon protein SctE.